Reading from the N-terminus, the 222-residue chain is Sortase A (222 aa).

Residues 1 to 7 (MLKKTIA) lie on the Cytoplasmic side of the membrane. The helical transmembrane segment at 8–28 (IIILIIGLLLIFSPFIKNGIV) threads the bilayer. Topologically, residues 29-222 (KYMSGHETIE…ELENKYFPSK (194 aa)) are extracellular. The Proton donor/acceptor role is filled by His-127. The active-site Acyl-thioester intermediate is Cys-188.

The protein belongs to the bacterial sortase family. Class A subfamily.

Its subcellular location is the cell membrane. Its activity is regulated as follows. Activity is enhanced by Zn(2+) and strongly enhanced by Ca(2+). Inhibited by chalcone, a precursor of several flavonoids, which blocks the SrtA active site. In terms of biological role, transpeptidase that anchors surface proteins to the cell wall. Recognizes and modifies its substrate by proteolytic cleavage of a C-terminal sorting signal. Following cleavage, a covalent intermediate is formed via a thioester bond between the sortase and its substrate, which is then transferred and covalently attached to the cell wall. This sortase recognizes a Leu-Pro-x-Thr-Gly (LPXTG) motif, which is cleaved by the sortase between the threonine and glycine residues. Involved in pathogenesis. May regulate the rate of synthesis and/or the stability of a subset of LPXTG proteins. Not involved in cell wall-anchoring of Hbp2 (SvpA) or Hbp1. This chain is Sortase A, found in Listeria monocytogenes serovar 1/2a (strain ATCC BAA-679 / EGD-e).